The sequence spans 227 residues: MYGDYMKYMKKIVLFLIINILPILILGLYLYANIGGAEDVKEVIENSPFKEFTYIDHKTLMMLKNDVNLKNMPEFYKESIILINGIYIGNHGSFGIKIPLGFLIKYIPIDNFKYYNGVLIKNLNEDDLGKAEMNDLVNTIPPNYKDVLIYRENYTIGIYYDLNSNKTYLIEVFRKPNNQEIDTEKLRNELLQKTNAVDCNVVDMGDKVYVYLEFNGIDLNLINNGIT.

A run of 2 helical transmembrane segments spans residues 12–32 (IVLF…YLYA) and 80–100 (IILI…KIPL).

It localises to the cell membrane. This is an uncharacterized protein from Methanocaldococcus jannaschii (strain ATCC 43067 / DSM 2661 / JAL-1 / JCM 10045 / NBRC 100440) (Methanococcus jannaschii).